Here is a 402-residue protein sequence, read N- to C-terminus: Oligopeptide transport ATP-binding protein OppD (402 aa).

The ABC transporter domain occupies 22 to 309; the sequence is LDITDLHVNF…PLHPYTWALI (288 aa). An ATP-binding site is contributed by 58–65; the sequence is GESGSGKS.

It belongs to the ABC transporter superfamily. In terms of assembly, the complex is composed of two ATP-binding proteins (OppD and OppF), two transmembrane proteins (OppB and OppC) and a solute-binding protein (OppA).

It localises to the cell membrane. The enzyme catalyses a [peptide](out) + ATP + H2O = a [peptide](in) + ADP + phosphate + H(+). Part of the ABC transporter complex OppABCDF involved in the uptake of oligopeptides. Probably responsible for energy coupling to the transport system. This chain is Oligopeptide transport ATP-binding protein OppD (oppD), found in Mycoplasma genitalium (strain ATCC 33530 / DSM 19775 / NCTC 10195 / G37) (Mycoplasmoides genitalium).